The primary structure comprises 229 residues: UPF0173 metal-dependent hydrolase SH1218 (229 aa).

This sequence belongs to the UPF0173 family.

In Staphylococcus haemolyticus (strain JCSC1435), this protein is UPF0173 metal-dependent hydrolase SH1218.